We begin with the raw amino-acid sequence, 1805 residues long: MNRDYLKNLYLQRLESERYSDVFRESMSSLVSTEIINAVISLAVQDDDETMLVDLLELFLQNLESNVVFHEKLTKSSFHLLLFKRPLGIQSYTKLKSIYDRVGSRRVVPGFEHTEFLSKNFYNYCLYKHAYKDYQFDLELDAGSLGPVETNLFKDLLKAVCIENRENEHLANYIKTLPMDVSVFLAIVMPDFRIDASRLGPEDVFLVCPSQVRGYDPKQFTKAFLCSLNSEGGLCRVCGRRVLGCGFEEIDREEYLDSVSGNIEEMCFGVSHWEKIRTPRMLTTILRSLFKRPGCLECYKCLRYFPIEEQGEMEDIVLRFLRYAASILSIGNIQVSLRMFPFIRHTPRVVFSYFVILFEGFLKYSGNLFLKNVIRNVSTRNKAKFMGVRAMIFEYYLKGSIESASSTEENTKNEGGSGAVENPGRKRADDLGDLFAPLSEFFDEERKAFVRNNMFYIYPIMYSLSFPYYTPDLAFTQANNHFLIISLFLRGEESRIDEIGYGKDELYRMGVDVMIPLLCNGYFKYDVLSRFFGNVQEYIRAHLPKFLFALKKVYVERPFEFRVCVFKILKCIIEAISGNVRMLFNYLFPFVEFFMRSHEESCGTDCKMIFIEYYSSFFKNDCLVRNMSRIFPYLDAEKIARWSNVKSEDDYLDIVIGLLDTRGHFSQEMAAKKAVELLARVFGDPGKGKGFDEESFVENVLRRFFKSREFRMKIGNVYGKLKELGNDAAFLIGCISQEFLDANPLPSVCSVLIEECTPEAIARVMVEKYLFEMDPGKQDLHFFIIQETLRFIKGPLSDRMEEVVEQFRSTQYFYEYVPVHPVEGVYEKTYTFKRFLGRLYRYSLNEIAKSEMQEYFSLLKYGNLLDTLFLEFHCLCLCRLLLEAGDHKVLGMVREIANNLQEGVDKRIARFVLKLHGFTSGKHIEDQQILRISFFLKDHHNAIQTLEKMIRKERKSELFDLLQYCYYSIKDYDKVLGINSVFARPSLINLFFRFCVDKNFAAARRCLEPKPGHDGVKEESGEDHKGQAPRELDVKILMEEIIDECQDDEVTKFMNDCKKIEGDFSEWKRLESRNEVFKHFIKDCELVSKSKNLLKTLDLIAGRRELAGDNRMLLECHESLVASIRSMMDARDDMSCDEMFESLLTAEKQDTIGNSSQGLHSREYFDDFASVDMVRAERRSERIGYMDRSKSGSTSGYSSLEEFERDLKLAIIRNYRGDDDVGRCIQEIGGMLLKREWCVLYELAELNVLQGKIGDAKTSLKKVLEIFPKTSMLYKKALIRYSELLDTKTAYTSALSILKDSGKLFLLGAKKFESTEPVKAMEMYINSVIHDNQCSDEAVPRIFHLFSEMMPPGDINAGAVLLKKFLESSISLLPPYYNQILSRLSHPNQDVANVVSRIVFELMENYPSKTFWRSLIMMNSQVPSTRKRMEGIVSGLTLDNKVALSNVKRISEELTCISRSKKNELTMEEDFPAFAKMFPAGVTVPNTKVLISGVRNEVKVFNSLQRPKRICFVGSDGKNYYWLCKNQDDLRKDSRFMDLNLIINSILKKQSSRKYIRTYAVIPFSHESGIIEWIGGLSSLKAICDTYYARDGISISETACRFVHNKKIGMREWHRVASKFHPKFHLWFHDSFPHPFSWLVARNNYTQTYAIMNIVGWFMGLGDRHAENILFDSNTGDTVHVDLNCIFGKGKELQVPERVPYRLTQNIVDAFGVLGLEGSYNTSLCTTLDLFLKNKNILVSNLLSFVYDPLFEWRRKSATTPKKIIEDLWHKMDDLDACSKCDVLNEEATNDENLCMMYIGWLPFI.

The disordered stretch occupies residues 406-425; that stretch reads STEENTKNEGGSGAVENPGR. The 493-residue stretch at 928–1420 folds into the FAT domain; it reads QILRISFFLK…FWRSLIMMNS (493 aa). The 300-residue stretch at 1494 to 1793 folds into the PI3K/PI4K catalytic domain; sequence VRNEVKVFNS…LNEEATNDEN (300 aa). Residues 1500–1506 form a G-loop region; sequence VFNSLQR. The interval 1660–1668 is catalytic loop; that stretch reads GLGDRHAEN. An activation loop region spans residues 1680-1704; the sequence is HVDLNCIFGKGKELQVPERVPYRLT. The region spanning 1773–1805 is the FATC domain; sequence DDLDACSKCDVLNEEATNDENLCMMYIGWLPFI.

It belongs to the PI3/PI4-kinase family. ATM subfamily.

It is found in the nucleus. The enzyme catalyses L-seryl-[protein] + ATP = O-phospho-L-seryl-[protein] + ADP + H(+). It carries out the reaction L-threonyl-[protein] + ATP = O-phospho-L-threonyl-[protein] + ADP + H(+). Functionally, serine/threonine protein kinase which activates checkpoint signaling upon genotoxic stresses such as ionizing radiation (IR), ultraviolet light (UV), or DNA replication stalling, thereby acting as a DNA damage sensor. Recognizes the substrate consensus sequence [ST]-Q. Recruited to DNA lesions in order to initiate the DNA repair by homologous recombination. Phosphorylates histone H2A to form H2AS128ph (gamma-H2A) at sites of DNA damage, also involved in the regulation of DNA damage response mechanism. Required for cell growth and meiotic recombination. The sequence is that of Probable serine/threonine-protein kinase MEC1 homolog (MEC1) from Encephalitozoon cuniculi (strain GB-M1) (Microsporidian parasite).